Consider the following 507-residue polypeptide: Glycerol kinase (507 aa).

T14 contacts ADP. ATP-binding residues include T14, T15, and S16. Residue T14 participates in sn-glycerol 3-phosphate binding. R18 contributes to the ADP binding site. 4 residues coordinate sn-glycerol 3-phosphate: R84, E85, Y136, and D246. R84, E85, Y136, D246, and Q247 together coordinate glycerol. Positions 268 and 311 each coordinate ADP. ATP-binding residues include T268, G311, Q315, and G412. 2 residues coordinate ADP: G412 and N416.

It belongs to the FGGY kinase family.

It catalyses the reaction glycerol + ATP = sn-glycerol 3-phosphate + ADP + H(+). It functions in the pathway polyol metabolism; glycerol degradation via glycerol kinase pathway; sn-glycerol 3-phosphate from glycerol: step 1/1. With respect to regulation, inhibited by fructose 1,6-bisphosphate (FBP). Functionally, key enzyme in the regulation of glycerol uptake and metabolism. Catalyzes the phosphorylation of glycerol to yield sn-glycerol 3-phosphate. This is Glycerol kinase from Vibrio atlanticus (strain LGP32) (Vibrio splendidus (strain Mel32)).